A 425-amino-acid polypeptide reads, in one-letter code: 3-isopropylmalate dehydratase large subunit (425 aa).

The [4Fe-4S] cluster site is built by cysteine 306, cysteine 366, and cysteine 369.

It belongs to the aconitase/IPM isomerase family. LeuC type 2 subfamily. As to quaternary structure, heterodimer of LeuC and LeuD. It depends on [4Fe-4S] cluster as a cofactor.

It catalyses the reaction (2R,3S)-3-isopropylmalate = (2S)-2-isopropylmalate. It functions in the pathway amino-acid biosynthesis; L-leucine biosynthesis; L-leucine from 3-methyl-2-oxobutanoate: step 2/4. In terms of biological role, catalyzes the isomerization between 2-isopropylmalate and 3-isopropylmalate, via the formation of 2-isopropylmaleate. This Nautilia profundicola (strain ATCC BAA-1463 / DSM 18972 / AmH) protein is 3-isopropylmalate dehydratase large subunit.